Here is a 166-residue protein sequence, read N- to C-terminus: Small ribosomal subunit protein uS5 (166 aa).

One can recognise an S5 DRBM domain in the interval 11-74 (LQEKLIAVNR…EKARRNMKTV (64 aa)).

This sequence belongs to the universal ribosomal protein uS5 family. As to quaternary structure, part of the 30S ribosomal subunit. Contacts proteins S4 and S8.

Its function is as follows. With S4 and S12 plays an important role in translational accuracy. In terms of biological role, located at the back of the 30S subunit body where it stabilizes the conformation of the head with respect to the body. In Photorhabdus laumondii subsp. laumondii (strain DSM 15139 / CIP 105565 / TT01) (Photorhabdus luminescens subsp. laumondii), this protein is Small ribosomal subunit protein uS5.